The chain runs to 319 residues: Ribonucleoside-diphosphate reductase small chain (319 aa).

Fe cation is bound by residues aspartate 70, glutamate 101, and histidine 104. Tyrosine 108 is a catalytic residue. Glutamate 163, glutamate 197, and histidine 200 together coordinate Fe cation. Positions 313 to 319 (FSLDVDF) are interaction with R1.

Belongs to the ribonucleoside diphosphate reductase small chain family. As to quaternary structure, interacts with RNR1/OPG080 subunit. Can interact with host RNR1 supunit. Fe cation is required as a cofactor.

The enzyme catalyses a 2'-deoxyribonucleoside 5'-diphosphate + [thioredoxin]-disulfide + H2O = a ribonucleoside 5'-diphosphate + [thioredoxin]-dithiol. Its function is as follows. Ribonucleoside-diphosphate reductase holoenzyme provides the precursors necessary for viral DNA synthesis. Allows virus growth in non-dividing cells. Catalyzes the biosynthesis of deoxyribonucleotides from the corresponding ribonucleotides. In Homo sapiens (Human), this protein is Ribonucleoside-diphosphate reductase small chain (OPG048).